Here is a 433-residue protein sequence, read N- to C-terminus: Methylenetetrahydrofolate--tRNA-(uracil-5-)-methyltransferase TrmFO (433 aa).

Residue 8–13 participates in FAD binding; sequence GAGLAG.

The protein belongs to the MnmG family. TrmFO subfamily. Requires FAD as cofactor.

It is found in the cytoplasm. It catalyses the reaction uridine(54) in tRNA + (6R)-5,10-methylene-5,6,7,8-tetrahydrofolate + NADH + H(+) = 5-methyluridine(54) in tRNA + (6S)-5,6,7,8-tetrahydrofolate + NAD(+). The catalysed reaction is uridine(54) in tRNA + (6R)-5,10-methylene-5,6,7,8-tetrahydrofolate + NADPH + H(+) = 5-methyluridine(54) in tRNA + (6S)-5,6,7,8-tetrahydrofolate + NADP(+). Its function is as follows. Catalyzes the folate-dependent formation of 5-methyl-uridine at position 54 (M-5-U54) in all tRNAs. The sequence is that of Methylenetetrahydrofolate--tRNA-(uracil-5-)-methyltransferase TrmFO from Carboxydothermus hydrogenoformans (strain ATCC BAA-161 / DSM 6008 / Z-2901).